The following is a 250-amino-acid chain: uncharacterized protein (250 aa).

The signal sequence occupies residues M1 to A17. N-linked (GlcNAc...) asparagine glycosylation is found at N48, N159, N223, and N239.

The protein localises to the secreted. This is an uncharacterized protein from Caenorhabditis elegans.